A 198-amino-acid chain; its full sequence is Small ribosomal subunit protein uS7 (198 aa).

This sequence belongs to the universal ribosomal protein uS7 family. As to quaternary structure, part of the 30S ribosomal subunit.

Functionally, one of the primary rRNA binding proteins, it binds directly to 16S rRNA where it nucleates assembly of the head domain of the 30S subunit. Is located at the subunit interface close to the decoding center. This is Small ribosomal subunit protein uS7 from Desulfurococcus amylolyticus (strain DSM 18924 / JCM 16383 / VKM B-2413 / 1221n) (Desulfurococcus kamchatkensis).